Reading from the N-terminus, the 184-residue chain is ATP synthase subunit delta (184 aa).

The protein belongs to the ATPase delta chain family. In terms of assembly, F-type ATPases have 2 components, F(1) - the catalytic core - and F(0) - the membrane proton channel. F(1) has five subunits: alpha(3), beta(3), gamma(1), delta(1), epsilon(1). F(0) has three main subunits: a(1), b(2) and c(10-14). The alpha and beta chains form an alternating ring which encloses part of the gamma chain. F(1) is attached to F(0) by a central stalk formed by the gamma and epsilon chains, while a peripheral stalk is formed by the delta and b chains.

It is found in the cell membrane. Its function is as follows. F(1)F(0) ATP synthase produces ATP from ADP in the presence of a proton or sodium gradient. F-type ATPases consist of two structural domains, F(1) containing the extramembraneous catalytic core and F(0) containing the membrane proton channel, linked together by a central stalk and a peripheral stalk. During catalysis, ATP synthesis in the catalytic domain of F(1) is coupled via a rotary mechanism of the central stalk subunits to proton translocation. In terms of biological role, this protein is part of the stalk that links CF(0) to CF(1). It either transmits conformational changes from CF(0) to CF(1) or is implicated in proton conduction. The sequence is that of ATP synthase subunit delta from Christiangramia forsetii (strain DSM 17595 / CGMCC 1.15422 / KT0803) (Gramella forsetii).